Here is a 289-residue protein sequence, read N- to C-terminus: Glyoxylate/succinic semialdehyde reductase 1 (289 aa).

N-acetylmethionine is present on M1. NADP(+)-binding positions include 4–18 (GFLG…MSMN) and T95. Residue K170 is part of the active site. K238 lines the NADP(+) pocket.

The protein belongs to the HIBADH-related family. NP60 subfamily.

The protein localises to the cytoplasm. It is found in the cytosol. It catalyses the reaction glycolate + NADP(+) = glyoxylate + NADPH + H(+). The enzyme catalyses 4-hydroxybutanoate + NADP(+) = succinate semialdehyde + NADPH + H(+). The ratio of NADPH/NADP(+) may regulate enzymatic activity. Functionally, catalyzes the NADPH-dependent reduction of glyoxylate to glycolate as well as succinic semialdehyde (SSA) to gamma-hydroxybutyrate in vitro. May function in redox homeostasis and play a role in oxidative stress tolerance by detoxifying glyoxylate and SSA generated in glycolate metabolism and GABA metabolism, respectively. The chain is Glyoxylate/succinic semialdehyde reductase 1 (GLYR1) from Arabidopsis thaliana (Mouse-ear cress).